The following is a 597-amino-acid chain: Protein unc-93 homolog B1 (597 aa).

Residues 1-29 form a disordered region; that stretch reads MEAEPPLYPMAGAAGPQGDEDLLGVPDGP. 5 helical membrane passes run 64-84, 110-130, 132-152, 160-180, and 223-243; these read VLAA…LLQM, KMLM…PVLI, FFGT…FVST, TLVP…ASMG, and IFYS…IYFL. N-linked (GlcNAc...) asparagine glycosylation is found at Asn251 and Asn272. The next 5 membrane-spanning stretches (helical) occupy residues 285 to 305, 343 to 363, 378 to 398, 403 to 423, and 428 to 448; these read LIVV…LVLG, LVPF…GIAL, LLVA…LGLW, VPLV…FFWA, and VLQH…GSAL. Residue Asn449 is glycosylated (N-linked (GlcNAc...) asparagine). 2 helical membrane passes run 469–489 and 491–511; these read FIFT…YLGS and LHMK…AVSY. Positions 522–597 are disordered; it reads VAPRQPRIPR…AQGGDGPEEQ (76 aa). Residues Ser547 and Ser550 each carry the phosphoserine modification.

Belongs to the unc-93 family. In terms of assembly, interacts with TLR3, TLR5, TLR7, and TLR9 (probably via transmembrane domain). In terms of processing, N-glycosylated. As to expression, expressed in plasmocytoid dendritic cells (at protein level). Highly expressed in antigen-presenting cells. Expressed in heart, and at lower level in kidney. Expressed at low level in other tissues.

It is found in the endoplasmic reticulum membrane. The protein resides in the endosome. It localises to the lysosome. The protein localises to the cytoplasmic vesicle. Its subcellular location is the phagosome. In terms of biological role, plays an important role in innate and adaptive immunity by regulating nucleotide-sensing Toll-like receptor (TLR) signaling. Required for the transport of a subset of TLRs (including TLR3, TLR7 and TLR9) from the endoplasmic reticulum to endolysosomes where they can engage pathogen nucleotides and activate signaling cascades. May play a role in autoreactive B-cells removal. In Homo sapiens (Human), this protein is Protein unc-93 homolog B1.